The chain runs to 780 residues: Striatin (780 aa).

Positions 53–120 (LHFLQHEWAR…QERAKYHKLK (68 aa)) form a coiled coil. Positions 55-63 (FLQHEWARF) are caveolin-binding. Positions 124–145 (ELNQGDMKPPSYDSDEGNETEV) are disordered. A Phosphoserine modification is found at serine 137. Residues 149–166 (QNSQFMWKQGRQLLRQYL) are calmodulin-binding. The residue at position 225 (threonine 225) is a Phosphothreonine. 4 positions are modified to phosphoserine: serine 227, serine 229, serine 245, and serine 259. 3 disordered regions span residues 290 to 321 (FLVA…TPER), 334 to 353 (EQYK…NRSK), and 363 to 388 (DVDE…LPEQ). Residues 299-315 (NESRSAGDGTDWEKEDQ) are compositionally biased toward basic and acidic residues. The span at 338 to 351 (KERKGKKGVKRPNR) shows a compositional bias: basic residues. 6 WD repeats span residues 461–500 (SHFD…PAKK), 514–553 (AHKG…VDPY), 567–606 (GHTD…PALT), 662–701 (SSSC…LIHS), 704–743 (AHLE…CIQE), and 750–780 (KFEE…KVFV).

It belongs to the WD repeat striatin family. As to quaternary structure, part of the core of STRIPAK complexes composed of PP2A catalytic and scaffolding subunits, the striatins (PP2A regulatory subunits), the striatin-associated proteins MOB4, STRIP1 and STRIP2, PDCD10 and members of the STE20 kinases, such as STK24 and STK26. Interacts with CTTNBP2; this interaction may regulate dendritic spine distribution of STRN. Activation of glutamate receptors weakens the interaction with CTTNBP2. As to expression, mainly expressed in the central nervous system. Mostly confined in dendrites, not in axons, and is most abundant in dendritic spines.

The protein resides in the cytoplasm. It is found in the membrane. It localises to the cell projection. The protein localises to the dendritic spine. Functionally, calmodulin-binding scaffolding protein which is the center of the striatin-interacting phosphatase and kinase (STRIPAK) complexes. STRIPAK complexes have critical roles in protein (de)phosphorylation and are regulators of multiple signaling pathways including Hippo, MAPK, nuclear receptor and cytoskeleton remodeling. Different types of STRIPAK complexes are involved in a variety of biological processes such as cell growth, differentiation, apoptosis, metabolism and immune regulation. The sequence is that of Striatin (Strn) from Rattus norvegicus (Rat).